We begin with the raw amino-acid sequence, 77 residues long: Acyl carrier protein (77 aa).

The Carrier domain occupies 2–77 (SNIEERVKKI…AAIDYVTANQ (76 aa)). At Ser-37 the chain carries O-(pantetheine 4'-phosphoryl)serine.

Belongs to the acyl carrier protein (ACP) family. 4'-phosphopantetheine is transferred from CoA to a specific serine of apo-ACP by AcpS. This modification is essential for activity because fatty acids are bound in thioester linkage to the sulfhydryl of the prosthetic group.

The protein localises to the cytoplasm. It functions in the pathway lipid metabolism; fatty acid biosynthesis. Carrier of the growing fatty acid chain in fatty acid biosynthesis. This is Acyl carrier protein from Colwellia psychrerythraea (strain 34H / ATCC BAA-681) (Vibrio psychroerythus).